The primary structure comprises 755 residues: von Willebrand factor A domain-containing protein 2 (755 aa).

The first 23 residues, 1–23, serve as a signal peptide directing secretion; sequence MPPFLLLEAVCVFLFSRVPPSLP. In terms of domain architecture, VWFA 1 spans 51-222; that stretch reads DIMFLLDGSN…DATNGLFSTL (172 aa). Asn-147 carries N-linked (GlcNAc...) asparagine glycosylation. Residues 296-333 enclose the EGF-like 1 domain; sequence PGPCDSQPCQNGGTCVPEGLDGYQCLCPLAFGGEANCA. 3 disulfide bridges follow: Cys-299–Cys-310, Cys-304–Cys-320, and Cys-322–Cys-332. VWFA domains follow at residues 343 to 517 and 531 to 705; these read DLLF…QGKL and DLVF…IEWL. The 37-residue stretch at 712-748 folds into the EGF-like 2 domain; the sequence is PVNLCKPSPCMNEGSCVLQNGSYRCKCRDGWEGPHCE. 3 disulfide bridges follow: Cys-716/Cys-727, Cys-721/Cys-736, and Cys-738/Cys-747.

Forms monomers and multimers. In terms of processing, a 55 kDa form is produced by proteolytic cleavage. Expression is generally absent in normal colon and other normal body tissues, but it is induced an average of 78-fold in Stage II, III, and IV colon cancers, as well as in colon adenomas and colon cancer cell lines.

The protein localises to the secreted. The protein is von Willebrand factor A domain-containing protein 2 (VWA2) of Homo sapiens (Human).